The following is a 365-amino-acid chain: GTPase Obg (365 aa).

Positions 1 to 159 (MKFIDEARIE…RMLKLELKVL (159 aa)) constitute an Obg domain. Residues 160 to 334 (ADVGLLGMPN…LIYAIKDHLQ (175 aa)) form the OBG-type G domain. GTP-binding positions include 166–173 (GMPNAGKS), 191–195 (FTTLH), 213–216 (DIPG), 284–287 (NKLD), and 315–317 (SAL). The Mg(2+) site is built by serine 173 and threonine 193.

This sequence belongs to the TRAFAC class OBG-HflX-like GTPase superfamily. OBG GTPase family. Monomer. Mg(2+) serves as cofactor.

The protein resides in the cytoplasm. An essential GTPase which binds GTP, GDP and possibly (p)ppGpp with moderate affinity, with high nucleotide exchange rates and a fairly low GTP hydrolysis rate. Plays a role in control of the cell cycle, stress response, ribosome biogenesis and in those bacteria that undergo differentiation, in morphogenesis control. This is GTPase Obg from Cupriavidus taiwanensis (strain DSM 17343 / BCRC 17206 / CCUG 44338 / CIP 107171 / LMG 19424 / R1) (Ralstonia taiwanensis (strain LMG 19424)).